Reading from the N-terminus, the 206-residue chain is Flavin prenyltransferase UbiX (206 aa).

FMN contacts are provided by residues 14–16 (GAS), T40, 101–104 (SMGT), and R136. Residues Y166 and K182 each coordinate dimethylallyl phosphate.

This sequence belongs to the UbiX/PAD1 family.

The catalysed reaction is dimethylallyl phosphate + FMNH2 = prenylated FMNH2 + phosphate. Flavin prenyltransferase that catalyzes the synthesis of the prenylated FMN cofactor (prenyl-FMN) for 4-hydroxy-3-polyprenylbenzoic acid decarboxylase UbiD. The prenyltransferase is metal-independent and links a dimethylallyl moiety from dimethylallyl monophosphate (DMAP) to the flavin N5 and C6 atoms of FMN. The protein is Flavin prenyltransferase UbiX of Halalkalibacterium halodurans (strain ATCC BAA-125 / DSM 18197 / FERM 7344 / JCM 9153 / C-125) (Bacillus halodurans).